Consider the following 206-residue polypeptide: Small ribosomal subunit protein uS4 (206 aa).

An S4 RNA-binding domain is found at 96–156 (GRLDNVVYRM…EKAKKQSRVK (61 aa)).

This sequence belongs to the universal ribosomal protein uS4 family. In terms of assembly, part of the 30S ribosomal subunit. Contacts protein S5. The interaction surface between S4 and S5 is involved in control of translational fidelity.

Functionally, one of the primary rRNA binding proteins, it binds directly to 16S rRNA where it nucleates assembly of the body of the 30S subunit. With S5 and S12 plays an important role in translational accuracy. The protein is Small ribosomal subunit protein uS4 of Klebsiella pneumoniae (strain 342).